We begin with the raw amino-acid sequence, 327 residues long: MNSKSRITAIGTHVPNQILSNNDLEKMIDTNDEWIVQRTGMKERRIASEDEYSSNLAIKAVENLCTTYKKNLEDVDCIIVATTTADYVFPSVACQIQQYFNIPHTMAFDLNATCAGFTYGLHVGNSLITSGSHKKVLVVATETLSKVTDYTDRTTCILFGDGAGAILLERDENKPSFIAYHMGTNGHGGIHLYRTNLSTTMNDTPLQTNEKIVQNGREVYKWATRTVPVGIKELLHTANMKMDDIDWFIPHSANLRMIESICEKSQIPIHKTLTSVEYMGNTSSVSIPLALDLARKKGKLNNGDTLLLYGFGGGLTHLGLIVEWDLS.

Active-site residues include Cys-114 and His-251. Residues 252–256 (SANLR) form an ACP-binding region. Asn-281 is an active-site residue.

This sequence belongs to the thiolase-like superfamily. FabH family. As to quaternary structure, homodimer.

Its subcellular location is the cytoplasm. The enzyme catalyses malonyl-[ACP] + acetyl-CoA + H(+) = 3-oxobutanoyl-[ACP] + CO2 + CoA. It functions in the pathway lipid metabolism; fatty acid biosynthesis. Functionally, catalyzes the condensation reaction of fatty acid synthesis by the addition to an acyl acceptor of two carbons from malonyl-ACP. Catalyzes the first condensation reaction which initiates fatty acid synthesis and may therefore play a role in governing the total rate of fatty acid production. Possesses both acetoacetyl-ACP synthase and acetyl transacylase activities. Its substrate specificity determines the biosynthesis of branched-chain and/or straight-chain of fatty acids. The polypeptide is Beta-ketoacyl-[acyl-carrier-protein] synthase III 2 (Bacillus anthracis).